Reading from the N-terminus, the 59-residue chain is Sec-independent protein translocase protein TatA 1 (59 aa).

Residues 3–23 (FPLPWQLILILLVILVIFGAS) traverse the membrane as a helical segment.

It belongs to the TatA/E family. As to quaternary structure, forms a complex with TatC.

The protein localises to the cell inner membrane. In terms of biological role, part of the twin-arginine translocation (Tat) system that transports large folded proteins containing a characteristic twin-arginine motif in their signal peptide across membranes. TatA could form the protein-conducting channel of the Tat system. This Aquifex aeolicus (strain VF5) protein is Sec-independent protein translocase protein TatA 1.